The sequence spans 317 residues: HTH-type transcriptional regulator MetR (317 aa).

The 59-residue stretch at 1-59 folds into the HTH lysR-type domain; it reads MIEIKHLKTLQALRNSGSLAAAAAVLHQTQSALSHQFSDLEQRLGFRLFVRKSQPLRFT. The segment at residues 19 to 38 is a DNA-binding region (H-T-H motif); sequence LAAAAAVLHQTQSALSHQFS.

It belongs to the LysR transcriptional regulatory family.

It is found in the cytoplasm. In terms of biological role, control of the last step in methionine biosynthesis; MetR is a positive activator of the metA, metE and metH genes. It is also a negative regulator of its own expression. In Salmonella typhi, this protein is HTH-type transcriptional regulator MetR (metR).